A 494-amino-acid polypeptide reads, in one-letter code: Acetylcholine receptor subunit epsilon (494 aa).

The signal sequence occupies residues 1–20; it reads MTMALLGTLLLLALFGRSQG. The Extracellular portion of the chain corresponds to 21-239; that stretch reads KNEELSLYHH…VIYTLIIRRK (219 aa). Residues asparagine 86 and asparagine 161 are each glycosylated (N-linked (GlcNAc...) asparagine). The cysteines at positions 148 and 162 are disulfide-linked. A helical membrane pass occupies residues 240-264; that stretch reads PLFYVINIIVPCVLISGLVLLAYFL. The Cytoplasmic portion of the chain corresponds to 265 to 272; it reads PAQAGGQK. A helical membrane pass occupies residues 273–291; it reads CTVSINVLLAQTVFLFLIA. Over 292-306 the chain is Extracellular; it reads QKIPETSLSVPLLGR. The helical transmembrane segment at 307–328 threads the bilayer; the sequence is YLIFVMVVATLIVMNCVIVLNV. Over 329-457 the chain is Cytoplasmic; that stretch reads SLRTPTTHAT…WVRMGKALDN (129 aa). Residues 458–481 form a helical membrane-spanning segment; that stretch reads VCFWAALVLFSVGSTLIFLGGYFN. Topologically, residues 482–494 are extracellular; the sequence is QVPDLPYPPCIQP.

Belongs to the ligand-gated ion channel (TC 1.A.9) family. Acetylcholine receptor (TC 1.A.9.1) subfamily. Epsilon/CHRNE sub-subfamily. In terms of assembly, pentamer of two alpha chains, and one each of the beta, delta, and gamma (in immature muscle) or epsilon (in mature muscle) chains. The muscle heteropentamer composed of alpha-1, beta-1, delta, epsilon subunits interacts with the alpha-conotoxin ImII.

It localises to the postsynaptic cell membrane. It is found in the cell membrane. It catalyses the reaction K(+)(in) = K(+)(out). The enzyme catalyses Na(+)(in) = Na(+)(out). Its function is as follows. After binding acetylcholine, the AChR responds by an extensive change in conformation that affects all subunits and leads to opening of an ion-conducting channel across the plasma membrane. The sequence is that of Acetylcholine receptor subunit epsilon (Chrne) from Rattus norvegicus (Rat).